Reading from the N-terminus, the 617-residue chain is Alkaline/neutral invertase E, chloroplastic (617 aa).

Residues 1 to 45 (MAASETVLRVPLGSVSQSCYLASFFVNSTPNLSFKPVSRNRKTVR) constitute a chloroplast transit peptide. Ser-87 carries the phosphoserine modification.

It belongs to the glycosyl hydrolase 100 family. In terms of tissue distribution, expressed in roots, leaves and flowers.

The protein resides in the plastid. It localises to the chloroplast. The catalysed reaction is Hydrolysis of terminal non-reducing beta-D-fructofuranoside residues in beta-D-fructofuranosides.. Chloroplastic invertase that cleaves sucrose into glucose and fructose and is associated with the development of the photosynthetic apparatus and the assimilation of nitrogen in seedlings to control the sucrose to hexose ratio. Participates in the carbon flux between the cytosol and plastids in leaves. This chain is Alkaline/neutral invertase E, chloroplastic, found in Arabidopsis thaliana (Mouse-ear cress).